The primary structure comprises 507 residues: ATP synthase subunit alpha, chloroplastic (507 aa).

Position 170–177 (170–177 (GDRQTGKT)) interacts with ATP.

Belongs to the ATPase alpha/beta chains family. In terms of assembly, F-type ATPases have 2 components, CF(1) - the catalytic core - and CF(0) - the membrane proton channel. CF(1) has five subunits: alpha(3), beta(3), gamma(1), delta(1), epsilon(1). CF(0) has four main subunits: a, b, b' and c.

Its subcellular location is the plastid. It localises to the chloroplast thylakoid membrane. The enzyme catalyses ATP + H2O + 4 H(+)(in) = ADP + phosphate + 5 H(+)(out). Functionally, produces ATP from ADP in the presence of a proton gradient across the membrane. The alpha chain is a regulatory subunit. This Panax ginseng (Korean ginseng) protein is ATP synthase subunit alpha, chloroplastic.